The sequence spans 81 residues: Conotoxin Eb11.3 (81 aa).

The first 23 residues, 1–23 (MMFRLTSVWCLLVIVLLNSAVDG), serve as a signal peptide directing secretion. Cystine bridges form between cysteine 27–cysteine 41, cysteine 34–cysteine 48, cysteine 40–cysteine 56, and cysteine 47–cysteine 62. Leucine amide is present on leucine 69. A propeptide spanning residues 73 to 81 (AQYKRFFRR) is cleaved from the precursor.

The protein belongs to the conotoxin I2 superfamily. In terms of tissue distribution, expressed by the venom duct.

The protein resides in the secreted. The polypeptide is Conotoxin Eb11.3 (Conus eburneus (Ivory cone)).